The following is a 346-amino-acid chain: Aldose 1-epimerase (346 aa).

R79 lines the substrate pocket. Catalysis depends on H175, which acts as the Proton donor. D245 provides a ligand contact to substrate. The active-site Proton acceptor is the E309.

The protein belongs to the aldose epimerase family.

It localises to the cytoplasm. The enzyme catalyses alpha-D-glucose = beta-D-glucose. The protein operates within carbohydrate metabolism; hexose metabolism. Its function is as follows. Mutarotase converts alpha-aldose to the beta-anomer. It is active on D-glucose, L-arabinose, D-xylose, D-galactose, maltose and lactose. The chain is Aldose 1-epimerase (galM) from Escherichia coli (strain K12).